The chain runs to 184 residues: ATP synthase subunit b, chloroplastic (184 aa).

The chain crosses the membrane as a helical span at residues 31–49 (IINPSVVLSVLIYFGKGVL).

This sequence belongs to the ATPase B chain family. In terms of assembly, F-type ATPases have 2 components, F(1) - the catalytic core - and F(0) - the membrane proton channel. F(1) has five subunits: alpha(3), beta(3), gamma(1), delta(1), epsilon(1). F(0) has four main subunits: a(1), b(1), b'(1) and c(10-14). The alpha and beta chains form an alternating ring which encloses part of the gamma chain. F(1) is attached to F(0) by a central stalk formed by the gamma and epsilon chains, while a peripheral stalk is formed by the delta, b and b' chains.

It localises to the plastid. It is found in the chloroplast thylakoid membrane. Functionally, f(1)F(0) ATP synthase produces ATP from ADP in the presence of a proton or sodium gradient. F-type ATPases consist of two structural domains, F(1) containing the extramembraneous catalytic core and F(0) containing the membrane proton channel, linked together by a central stalk and a peripheral stalk. During catalysis, ATP synthesis in the catalytic domain of F(1) is coupled via a rotary mechanism of the central stalk subunits to proton translocation. In terms of biological role, component of the F(0) channel, it forms part of the peripheral stalk, linking F(1) to F(0). The sequence is that of ATP synthase subunit b, chloroplastic from Pinus koraiensis (Korean pine).